We begin with the raw amino-acid sequence, 344 residues long: Ion-translocating oxidoreductase complex subunit D (344 aa).

4 helical membrane passes run 23 to 43 (LVLG…GPGT), 44 to 64 (LLNL…MLAL), 77 to 99 (SALV…WLTL), and 120 to 140 (PFNP…LEMT). FMN phosphoryl threonine is present on T172. 5 helical membrane-spanning segments follow: residues 198–218 (LGSA…LFLL), 222–242 (LFTW…SLLF), 252–272 (GSPL…FIVT), 285–305 (LVFG…GGYP), and 306–326 (DGVA…DYYT).

The protein belongs to the NqrB/RnfD family. In terms of assembly, the complex is composed of six subunits: RnfA, RnfB, RnfC, RnfD, RnfE and RnfG. The cofactor is FMN.

The protein resides in the cell inner membrane. Functionally, part of a membrane-bound complex that couples electron transfer with translocation of ions across the membrane. In Pseudomonas aeruginosa (strain UCBPP-PA14), this protein is Ion-translocating oxidoreductase complex subunit D.